A 220-amino-acid chain; its full sequence is 1-Cys peroxiredoxin B (220 aa).

Residues 4–165 (LTLGDVVPDL…VLRATDALLT (162 aa)) form the Thioredoxin domain. The active-site Cysteine sulfenic acid (-SOH) intermediate is the C46. The Bipartite nuclear localization signal motif lies at 195-218 (KARFPAGFETAQLPSNKCYLRFTQ).

Belongs to the peroxiredoxin family. Prx6 subfamily.

It localises to the nucleus. The protein resides in the cytoplasm. It carries out the reaction a hydroperoxide + [thioredoxin]-dithiol = an alcohol + [thioredoxin]-disulfide + H2O. Its function is as follows. Thiol-specific peroxidase that catalyzes the reduction of hydrogen peroxide and organic hydroperoxides to water and alcohols, respectively. Seems to contribute to the inhibition of germination during stress. The polypeptide is 1-Cys peroxiredoxin B (Oryza sativa subsp. indica (Rice)).